Consider the following 42-residue polypeptide: Fungal defensin eurocin (42 aa).

Beta-D-GlcNAc-(1-&gt;4)-Mur2Ac(oyl-L-Ala-gamma-D-Glu-L-Lys-D-Ala-D-Ala)-di-trans,octa-cis-undecaprenyl diphosphate is bound by residues Phe-2, Gly-3, Cys-4, and His-14. 3 cysteine pairs are disulfide-bonded: Cys-4–Cys-27, Cys-11–Cys-38, and Cys-15–Cys-40. The interaction site with membranes lipids stretch occupies residues 31–35; sequence WYLGH. Cys-38 is a beta-D-GlcNAc-(1-&gt;4)-Mur2Ac(oyl-L-Ala-gamma-D-Glu-L-Lys-D-Ala-D-Ala)-di-trans,octa-cis-undecaprenyl diphosphate binding site.

The protein belongs to the invertebrate defensin family.

It localises to the secreted. It is found in the target cell membrane. In terms of biological role, antimicrobial peptide that acts against Gram-positive bacteria but not against Gram-negative bacteria. It selectively inhibits peptidoglycan biosynthesis through complex formation with the cell wall precursor lipid II (1:1 molar ratio) thus inhibiting cell wall synthesis. It does not disrupt cell membranes. In vivo, is effective against an intraperitoneal infection with S.pneumoniae. In vitro, it shows very low hemolytic and cytolytic activities. The polypeptide is Fungal defensin eurocin (Aspergillus amstelodami).